The primary structure comprises 403 residues: uncharacterized protein (403 aa).

The span at 55–88 shows a compositional bias: polar residues; that stretch reads LTGSPNPQATPKQENKSNFFSEKQSVRENGNSSA. The disordered stretch occupies residues 55–95; the sequence is LTGSPNPQATPKQENKSNFFSEKQSVRENGNSSAGEKKQKW. Residue Ser-58 is modified to Phosphoserine. In terms of domain architecture, J spans 113 to 177; it reads QYYEILDLKK…NLRAHYDRTG (65 aa). Residues 263–283 form a helical membrane-spanning segment; that stretch reads SIFYQLLPLIVVILFAFLSNF.

It localises to the endoplasmic reticulum membrane. This is an uncharacterized protein from Schizosaccharomyces pombe (strain 972 / ATCC 24843) (Fission yeast).